The chain runs to 429 residues: Cytochrome P450 BJ-3 (429 aa).

Cys376 serves as a coordination point for heme.

This sequence belongs to the cytochrome P450 family. Heme is required as a cofactor.

Its function is as follows. Cytochromes P450 are a group of heme-thiolate monooxygenases. They oxidize a variety of structurally unrelated compounds, including steroids, fatty acids, and xenobiotics. This Bradyrhizobium diazoefficiens (strain JCM 10833 / BCRC 13528 / IAM 13628 / NBRC 14792 / USDA 110) protein is Cytochrome P450 BJ-3 (cyp114).